The following is a 214-amino-acid chain: tRNA (guanine-N(7)-)-methyltransferase (214 aa).

Positions 43, 68, 95, and 117 each coordinate S-adenosyl-L-methionine. Asp117 is a catalytic residue. Residues Lys121, Asp153, and 190 to 193 (TEYE) contribute to the substrate site.

The protein belongs to the class I-like SAM-binding methyltransferase superfamily. TrmB family.

The enzyme catalyses guanosine(46) in tRNA + S-adenosyl-L-methionine = N(7)-methylguanosine(46) in tRNA + S-adenosyl-L-homocysteine. Its pathway is tRNA modification; N(7)-methylguanine-tRNA biosynthesis. Functionally, catalyzes the formation of N(7)-methylguanine at position 46 (m7G46) in tRNA. The protein is tRNA (guanine-N(7)-)-methyltransferase of Staphylococcus aureus (strain USA300).